Here is a 258-residue protein sequence, read N- to C-terminus: Imidazole glycerol phosphate synthase subunit HisF (258 aa).

Active-site residues include Asp11 and Asp130.

It belongs to the HisA/HisF family. As to quaternary structure, heterodimer of HisH and HisF.

It is found in the cytoplasm. It catalyses the reaction 5-[(5-phospho-1-deoxy-D-ribulos-1-ylimino)methylamino]-1-(5-phospho-beta-D-ribosyl)imidazole-4-carboxamide + L-glutamine = D-erythro-1-(imidazol-4-yl)glycerol 3-phosphate + 5-amino-1-(5-phospho-beta-D-ribosyl)imidazole-4-carboxamide + L-glutamate + H(+). The protein operates within amino-acid biosynthesis; L-histidine biosynthesis; L-histidine from 5-phospho-alpha-D-ribose 1-diphosphate: step 5/9. IGPS catalyzes the conversion of PRFAR and glutamine to IGP, AICAR and glutamate. The HisF subunit catalyzes the cyclization activity that produces IGP and AICAR from PRFAR using the ammonia provided by the HisH subunit. This chain is Imidazole glycerol phosphate synthase subunit HisF, found in Xanthomonas campestris pv. campestris (strain B100).